We begin with the raw amino-acid sequence, 832 residues long: Putative pentatricopeptide repeat-containing protein At5g08310, mitochondrial (832 aa).

The N-terminal 27 residues, 1 to 27 (MAFSRIALLCQRFSRQQQQRQLLHRPL), are a transit peptide targeting the mitochondrion. 19 PPR repeats span residues 105–139 (DMYA…RCFM), 140–174 (SPGA…GLCV), 176–212 (NAYT…GFHF), 213–247 (DKFT…GWLD), 252–281 (TILV…DIRL), 282–316 (NYKT…GMNA), 317–351 (DIAL…GIPP), 352–383 (DRGI…IDKK), 385–415 (VMLL…LMGN), 438–472 (DSDS…GLIP), 473–507 (GPMM…GVEP), 508–542 (SQFT…GFEP), 543–577 (WIKH…GFLG), 578–612 (HMVA…GHCP), 613–647 (DVIA…GLKP), 648–682 (TVAT…EKNP), 683–717 (DVIT…DCYP), 718–752 (NRIT…EMEP), and 753–787 (DSAV…GRFP).

This sequence belongs to the PPR family. P subfamily.

The protein localises to the mitochondrion. The protein is Putative pentatricopeptide repeat-containing protein At5g08310, mitochondrial of Arabidopsis thaliana (Mouse-ear cress).